Consider the following 315-residue polypeptide: Mitochondrial outer membrane import complex protein METAXIN (315 aa).

N-acetylmethionine is present on Met1. The stretch at 157–181 (ENAEQREKQIYKRASEAYEALSTRL) forms a coiled coil. The chain crosses the membrane as a helical span at residues 195–215 (LDAFLLSHILFIIQALPVTSV). Positions 240 to 277 (ASSSSPSPPLHSFPSSFPRKSSKPKSKPKVEKTEEEKK) are disordered. Positions 267-277 (PKVEKTEEEKK) are enriched in basic and acidic residues. Residues 284–304 (FFLAAQFLAVVIYVSVMGGGS) form a helical membrane-spanning segment.

Belongs to the metaxin family. As to quaternary structure, part of a high molecular weight complex that is distinct from the TOM complex. Interacts with a variety of mitochondrial precursor proteins. Expressed in roots, young cotyledons, flowers and leaves.

It localises to the mitochondrion inner membrane. The protein resides in the mitochondrion outer membrane. Involved in transport of proteins into the mitochondrion. The polypeptide is Mitochondrial outer membrane import complex protein METAXIN (MTX1) (Arabidopsis thaliana (Mouse-ear cress)).